The sequence spans 314 residues: Methionyl-tRNA formyltransferase (314 aa).

110 to 113 (SLLP) is a (6S)-5,6,7,8-tetrahydrofolate binding site.

This sequence belongs to the Fmt family.

It catalyses the reaction L-methionyl-tRNA(fMet) + (6R)-10-formyltetrahydrofolate = N-formyl-L-methionyl-tRNA(fMet) + (6S)-5,6,7,8-tetrahydrofolate + H(+). Functionally, attaches a formyl group to the free amino group of methionyl-tRNA(fMet). The formyl group appears to play a dual role in the initiator identity of N-formylmethionyl-tRNA by promoting its recognition by IF2 and preventing the misappropriation of this tRNA by the elongation apparatus. The sequence is that of Methionyl-tRNA formyltransferase from Bacillus cytotoxicus (strain DSM 22905 / CIP 110041 / 391-98 / NVH 391-98).